The primary structure comprises 185 residues: MAKAGYQPRLKKHYEEAIRKQLLETFKYENEMQVPRIDKVVINMGVGEATGDSKKPSVAAEDLALIAGQKAVITRARNSIAGFKVREGMPIGAKVTLRKDRMYEFLDRLVNVALPRVRDFRGLSPKSFDGHGNFAMGIKEHIVFPEINYDKVDQIWGMDIIVCTTAKTDDEARALLKAFNFPFRQ.

This sequence belongs to the universal ribosomal protein uL5 family. In terms of assembly, part of the 50S ribosomal subunit; part of the 5S rRNA/L5/L18/L25 subcomplex. Contacts the 5S rRNA and the P site tRNA. Forms a bridge to the 30S subunit in the 70S ribosome.

In terms of biological role, this is one of the proteins that bind and probably mediate the attachment of the 5S RNA into the large ribosomal subunit, where it forms part of the central protuberance. In the 70S ribosome it contacts protein S13 of the 30S subunit (bridge B1b), connecting the 2 subunits; this bridge is implicated in subunit movement. Contacts the P site tRNA; the 5S rRNA and some of its associated proteins might help stabilize positioning of ribosome-bound tRNAs. This chain is Large ribosomal subunit protein uL5, found in Chelativorans sp. (strain BNC1).